We begin with the raw amino-acid sequence, 182 residues long: Isopentenyl-diphosphate Delta-isomerase (182 aa).

Positions 25 and 32 each coordinate Mn(2+). A Nudix hydrolase domain is found at 30-164 (LLHLAFSSWL…PWAFSPWMVM (135 aa)). Cys-67 is a catalytic residue. His-69 provides a ligand contact to Mn(2+). Glu-87 provides a ligand contact to Mg(2+). Mn(2+)-binding residues include Glu-114 and Glu-116. Glu-116 is an active-site residue.

This sequence belongs to the IPP isomerase type 1 family. In terms of assembly, homodimer. Mg(2+) serves as cofactor. It depends on Mn(2+) as a cofactor.

It localises to the cytoplasm. The enzyme catalyses isopentenyl diphosphate = dimethylallyl diphosphate. It functions in the pathway isoprenoid biosynthesis; dimethylallyl diphosphate biosynthesis; dimethylallyl diphosphate from isopentenyl diphosphate: step 1/1. Functionally, catalyzes the 1,3-allylic rearrangement of the homoallylic substrate isopentenyl (IPP) to its highly electrophilic allylic isomer, dimethylallyl diphosphate (DMAPP). This is Isopentenyl-diphosphate Delta-isomerase from Escherichia coli (strain ATCC 8739 / DSM 1576 / NBRC 3972 / NCIMB 8545 / WDCM 00012 / Crooks).